Consider the following 485-residue polypeptide: Arginine biosynthesis bifunctional protein ArgJ, mitochondrial (485 aa).

Residues threonine 185, lysine 214, threonine 225, and glutamate 315 each coordinate substrate. The Nucleophile role is filled by threonine 225.

Belongs to the ArgJ family. As to quaternary structure, heterodimer of an alpha and a beta chain. In terms of processing, the alpha and beta chains are autoproteolytically processed from a single precursor protein within the mitochondrion.

Its subcellular location is the mitochondrion matrix. The catalysed reaction is N(2)-acetyl-L-ornithine + L-glutamate = N-acetyl-L-glutamate + L-ornithine. It catalyses the reaction L-glutamate + acetyl-CoA = N-acetyl-L-glutamate + CoA + H(+). It functions in the pathway amino-acid biosynthesis; L-arginine biosynthesis; L-ornithine and N-acetyl-L-glutamate from L-glutamate and N(2)-acetyl-L-ornithine (cyclic): step 1/1. The protein operates within amino-acid biosynthesis; L-arginine biosynthesis; N(2)-acetyl-L-ornithine from L-glutamate: step 1/4. In terms of biological role, catalyzes two activities which are involved in the cyclic version of arginine biosynthesis: the synthesis of acetylglutamate from glutamate and acetyl-CoA, and of ornithine by transacetylation between acetylornithine and glutamate. The sequence is that of Arginine biosynthesis bifunctional protein ArgJ, mitochondrial from Penicillium rubens (strain ATCC 28089 / DSM 1075 / NRRL 1951 / Wisconsin 54-1255) (Penicillium chrysogenum).